Here is a 656-residue protein sequence, read N- to C-terminus: Acetyl-coenzyme A synthetase (656 aa).

Residues 198 to 201 (RGGR) and threonine 316 each bind CoA. Residues 392 to 394 (GEP), 416 to 421 (DTFWQT), aspartate 507, and arginine 522 contribute to the ATP site. Position 530 (serine 530) interacts with CoA. Arginine 533 provides a ligand contact to ATP. The Mg(2+) site is built by valine 544, histidine 546, and valine 549. Position 591 (arginine 591) interacts with CoA. At lysine 616 the chain carries N6-acetyllysine.

This sequence belongs to the ATP-dependent AMP-binding enzyme family. Mg(2+) is required as a cofactor. Post-translationally, acetylated. Deacetylation by the SIR2-homolog deacetylase activates the enzyme.

It catalyses the reaction acetate + ATP + CoA = acetyl-CoA + AMP + diphosphate. Functionally, catalyzes the conversion of acetate into acetyl-CoA (AcCoA), an essential intermediate at the junction of anabolic and catabolic pathways. AcsA undergoes a two-step reaction. In the first half reaction, AcsA combines acetate with ATP to form acetyl-adenylate (AcAMP) intermediate. In the second half reaction, it can then transfer the acetyl group from AcAMP to the sulfhydryl group of CoA, forming the product AcCoA. In Rhodobacter capsulatus (strain ATCC BAA-309 / NBRC 16581 / SB1003), this protein is Acetyl-coenzyme A synthetase.